The primary structure comprises 204 residues: Glycerol-3-phosphate acyltransferase (204 aa).

5 consecutive transmembrane segments (helical) span residues 8-28 (ILIFAYLLGSINSAIIVCYIF), 53-73 (VLAAITLIFDILKGLVPVVIA), 81-101 (FITACTALYAILGHIFPIFFG), 116-136 (FGFSWILGLIFVITWLCVAII), and 155-175 (VIFTSDLQVAAPFLIIAIIIL).

This sequence belongs to the PlsY family. In terms of assembly, probably interacts with PlsX.

It localises to the cell inner membrane. It carries out the reaction an acyl phosphate + sn-glycerol 3-phosphate = a 1-acyl-sn-glycero-3-phosphate + phosphate. Its pathway is lipid metabolism; phospholipid metabolism. Its function is as follows. Catalyzes the transfer of an acyl group from acyl-phosphate (acyl-PO(4)) to glycerol-3-phosphate (G3P) to form lysophosphatidic acid (LPA). This enzyme utilizes acyl-phosphate as fatty acyl donor, but not acyl-CoA or acyl-ACP. This Francisella tularensis subsp. holarctica (strain OSU18) protein is Glycerol-3-phosphate acyltransferase.